The following is a 345-amino-acid chain: MTDAPLSEAMKPIIFSASEGPLSRAQAEEAFNLMFEGLASPAQMGGLIMAIRARGESVAEYAAAAQVMRDRCVKVSAPDGAMDIVGTGGDGMGTLNISTATAFVVAGAGVPVAKHGNRNLSSKSGAADVLTQMGINVMVGAAVVEQSLKEAGIGFMMAPMHHPAVKHVMPIRQELGCKTIFNILGPLTNPAGAKRQLTGAFAIDLIYPMAETLKELGSEAAWLVHGSDGTDEISISGKTDVVELKDGALRSRVVHPEDAGLPVHPFRDILGGTPDENAQAFRDLLDGAQGAYRDAVLLNAAAALIVAGRVTELRDGVEIARESIDSGAAKRAVEAVARVTSTSTA.

Residues Gly86, 89–90, Thr94, 96–99, 114–122, and Ala126 each bind 5-phospho-alpha-D-ribose 1-diphosphate; these read GD, NIST, and KHGNRNLSS. Gly86 contributes to the anthranilate binding site. Ser98 lines the Mg(2+) pocket. Asn117 contacts anthranilate. An anthranilate-binding site is contributed by Arg172. Residues Asp231 and Glu232 each contribute to the Mg(2+) site.

Belongs to the anthranilate phosphoribosyltransferase family. In terms of assembly, homodimer. It depends on Mg(2+) as a cofactor.

It catalyses the reaction N-(5-phospho-beta-D-ribosyl)anthranilate + diphosphate = 5-phospho-alpha-D-ribose 1-diphosphate + anthranilate. It functions in the pathway amino-acid biosynthesis; L-tryptophan biosynthesis; L-tryptophan from chorismate: step 2/5. In terms of biological role, catalyzes the transfer of the phosphoribosyl group of 5-phosphorylribose-1-pyrophosphate (PRPP) to anthranilate to yield N-(5'-phosphoribosyl)-anthranilate (PRA). In Jannaschia sp. (strain CCS1), this protein is Anthranilate phosphoribosyltransferase.